Reading from the N-terminus, the 174-residue chain is Shikimate kinase 2 (174 aa).

12-17 (GCGKTT) provides a ligand contact to ATP. Mg(2+) contacts are provided by T16 and D32. Substrate-binding residues include D34, R58, and G79. The interval 112-126 (QAAPEEDLRPTLTGK) is LID domain. R120 lines the ATP pocket. Residue R139 coordinates substrate.

This sequence belongs to the shikimate kinase family. AroL subfamily. As to quaternary structure, monomer. It depends on Mg(2+) as a cofactor.

It is found in the cytoplasm. The enzyme catalyses shikimate + ATP = 3-phosphoshikimate + ADP + H(+). It functions in the pathway metabolic intermediate biosynthesis; chorismate biosynthesis; chorismate from D-erythrose 4-phosphate and phosphoenolpyruvate: step 5/7. Catalyzes the specific phosphorylation of the 3-hydroxyl group of shikimic acid using ATP as a cosubstrate. The sequence is that of Shikimate kinase 2 from Shigella boydii serotype 18 (strain CDC 3083-94 / BS512).